A 500-amino-acid polypeptide reads, in one-letter code: Probable transcription factor FPSE_09189 (500 aa).

2 disordered regions span residues 161-197 and 457-500; these read MVRH…PSLA and IRTG…TQLE. Residues 459–474 show a composition bias toward basic and acidic residues; the sequence is TGHEDSSRDGGRENKA. A compositionally biased stretch (polar residues) spans 475-484; sequence MNRNRSTGNS.

It localises to the nucleus. Functionally, the two putative transcription factors FPSE_09188 and FPSE_09189 could be responsible for orchestrating expression of the W493 A and B biosynthesis cluster genes. W493 A and B consist of six amino acid residues D-allo-thr, L-Ala, D-Ala, L-Gln, D-Tyr, and L-Val/L-Ile linked to a 3-hydroxy-4-methyltetradecanoic acid polyketide chain. This chain is Probable transcription factor FPSE_09189, found in Fusarium pseudograminearum (strain CS3096) (Wheat and barley crown-rot fungus).